A 72-amino-acid polypeptide reads, in one-letter code: General transcription factor IIH subunit 5 (72 aa).

Belongs to the TFB5 family. In terms of assembly, component of the 7-subunit TFIIH core complex composed of XPB/repB, XPD/repD, gtf2h1, gtf2h2, gtf2h3, gtf2h4 and gtf2h5, which is active in NER. The core complex associates with the 3-subunit CDK-activating kinase (CAK) module composed of cycH/cyclin H, cdk7 and mnat1 to form the 10-subunit holoenzyme (holo-TFIIH) active in transcription.

The protein localises to the nucleus. In terms of biological role, component of the general transcription and DNA repair factor IIH (TFIIH) core complex, which is involved in general and transcription-coupled nucleotide excision repair (NER) of damaged DNA and, when complexed to CAK, in RNA transcription by RNA polymerase II. In NER, TFIIH acts by opening DNA around the lesion to allow the excision of the damaged oligonucleotide and its replacement by a new DNA fragment. In transcription, TFIIH has an essential role in transcription initiation. When the pre-initiation complex (PIC) has been established, TFIIH is required for promoter opening and promoter escape. Phosphorylation of the C-terminal tail (CTD) of the largest subunit of RNA polymerase II by the kinase module CAK controls the initiation of transcription. The protein is General transcription factor IIH subunit 5 (gtf2h5) of Dictyostelium discoideum (Social amoeba).